A 204-amino-acid polypeptide reads, in one-letter code: uncharacterized protein (204 aa).

A disordered region spans residues 77–111 (APHGSRIPGRCRRSPRCSRRPGGSRLRGGTWTPRL). Positions 85-95 (GRCRRSPRCSR) are enriched in basic residues. Over residues 96–105 (RPGGSRLRGG) the composition is skewed to low complexity.

This is an uncharacterized protein from Homo sapiens (Human).